The sequence spans 363 residues: tRNA/tmRNA (uracil-C(5))-methyltransferase (363 aa).

S-adenosyl-L-methionine contacts are provided by Gln-187, Tyr-215, Asn-220, Glu-236, and Asp-296. Cys-321 serves as the catalytic Nucleophile. Catalysis depends on Glu-355, which acts as the Proton acceptor.

Belongs to the class I-like SAM-binding methyltransferase superfamily. RNA M5U methyltransferase family. TrmA subfamily.

It catalyses the reaction uridine(54) in tRNA + S-adenosyl-L-methionine = 5-methyluridine(54) in tRNA + S-adenosyl-L-homocysteine + H(+). The enzyme catalyses uridine(341) in tmRNA + S-adenosyl-L-methionine = 5-methyluridine(341) in tmRNA + S-adenosyl-L-homocysteine + H(+). In terms of biological role, dual-specificity methyltransferase that catalyzes the formation of 5-methyluridine at position 54 (m5U54) in all tRNAs, and that of position 341 (m5U341) in tmRNA (transfer-mRNA). The protein is tRNA/tmRNA (uracil-C(5))-methyltransferase of Pseudomonas paraeruginosa (strain DSM 24068 / PA7) (Pseudomonas aeruginosa (strain PA7)).